The chain runs to 363 residues: Ribonuclease P protein subunit p40 (363 aa).

Component of nuclear RNase P and RNase MRP ribonucleoproteins. RNase P consists of a catalytic RNA moiety and about 10 protein subunits; POP1, POP4, POP5, POP7, RPP14, RPP21, RPP25, RPP30, RPP38 and RPP40. Within the RNase P complex, POP1, POP7 and RPP25 form the 'finger' subcomplex, POP5, RPP14, RPP40 and homodimeric RPP30 form the 'palm' subcomplex, and RPP21, POP4 and RPP38 form the 'wrist' subcomplex. All subunits of the RNase P complex interact with the catalytic RNA. Several subunits of RNase P are also part of the RNase MRP complex. RNase MRP consists of a catalytic RNA moiety and about 8 protein subunits; POP1, POP7, RPP25, RPP30, RPP38, RPP40 and possibly also POP4 and POP5.

The protein resides in the nucleus. The protein localises to the nucleolus. Component of ribonuclease P, a ribonucleoprotein complex that generates mature tRNA molecules by cleaving their 5'-ends. Also a component of the MRP ribonuclease complex, which cleaves pre-rRNA sequences. This is Ribonuclease P protein subunit p40 (RPP40) from Homo sapiens (Human).